The chain runs to 900 residues: Chromodomain-helicase-DNA-binding protein 1-like (900 aa).

In terms of domain architecture, Helicase ATP-binding spans 52-217 (VQCFHCQNGC…YSLLCVVEPD (166 aa)). Residue 65–72 (DEMGLGKT) coordinates ATP. The DEAH box motif lies at 168-171 (DEAH). The region spanning 345–507 (LLDRLLAFLY…QKPSAEADFQ (163 aa)) is the Helicase C-terminal domain. S534 is modified (phosphoserine). The interval 546–569 (PDALPAAAAAGGGSLEPEEGSELE) is disordered. A regulatory linker segment (RLS) region spans residues 606–640 (TLLEKTSHGGRTLRNKGSVLIPGLAEGPIKRKKIL). Phosphoserine is present on residues S612, S623, and S641. The segment at 620-678 (NKGSVLIPGLAEGPIKRKKILSPEELEDRRKKRQEAAAKRKRLMEEKRKEKEEAEHRKK) is required for ATPase activity. The segment at 641–673 (SPEELEDRRKKRQEAAAKRKRLMEEKRKEKEEA) is disordered. Positions 643 to 680 (EELEDRRKKRQEAAAKRKRLMEEKRKEKEEAEHRKKMA) form a coiled coil. Basic and acidic residues predominate over residues 653 to 673 (QEAAAKRKRLMEEKRKEKEEA). A Macro domain is found at 709-900 (SAELAYEDLD…ASSSSAPLVP (192 aa)). Position 894 is a phosphoserine (S894).

The protein belongs to the SNF2/RAD54 helicase family. As to quaternary structure, interacts with nucleosomes; interacts with the acidic patch of histones. Interacts (via macro domain) with PARP1; interacts only when PARP1 is poly-ADP-ribosylated (PARylated). Interacts with CIAO1.

Its subcellular location is the nucleus. The protein resides in the chromosome. It carries out the reaction ATP + H2O = ADP + phosphate + H(+). With respect to regulation, adopts an inactive conformation in absence of DNA damage. Binding to poly-ADP-ribosylated histones activates the ATP-dependent chromatin remodeler activity. Its function is as follows. ATP-dependent chromatin remodeler that mediates chromatin-remodeling following DNA damage. Recruited to DNA damage sites through interaction with poly-ADP-ribose: specifically recognizes and binds histones that are poly-ADP-ribosylated on serine residues in response to DNA damage. Poly-ADP-ribose-binding activates the ATP-dependent chromatin remodeler activity, thereby regulating chromatin during DNA repair. Catalyzes nucleosome sliding away from DNA breaks in an ATP-dependent manner. Chromatin remodeling activity promotes PARP2 removal from chromatin. The protein is Chromodomain-helicase-DNA-binding protein 1-like (Chd1l) of Mus musculus (Mouse).